The primary structure comprises 320 residues: MDGESSLERYLDQCDAEDVLASSHMFTPMTPYDDLAIQPLPGTSYSSTLEHSKELSTDFSSVDLSFLPDDLNQENEDQQEQTPSQSLEHDSGICLDASNLSQPFTPSECRDATQDSSNLCTMPITPMTPMTPMTPVAESSGIVPQLQNIVSTVNLACKLDLKKIALHARNAEYNPKRFAAVIMRIREPRTTALIFSSGKMVCTGAKSEEQSRLAARKYARVVQKLGFPAKFLDFKIQNMVGSCDVRFPIRLEGLVLTHQQFSSYEPELFPGLIYRMVKPRIVLLIFVSGKVVLTGAKERSEIYEAFENIYPILKGFKKTT.

It belongs to the TBP family. As to expression, expression is restricted to the gonads, and is higher in the ovary than the testis.

The protein resides in the nucleus. Its function is as follows. TATA box-binding transcription factor. Members of the TBP family are differentially required to regulate transcription and development during early embryogenesis. Required for gastrulation. Regulates a large subset of genes that are ventrally expressed. Binds to a subset of promoters. The protein is TATA box-binding protein-like 2 of Xenopus laevis (African clawed frog).